Consider the following 245-residue polypeptide: tRNA pseudouridine synthase A (245 aa).

Asp52 serves as the catalytic Nucleophile. A substrate-binding site is contributed by Tyr111.

This sequence belongs to the tRNA pseudouridine synthase TruA family. Homodimer.

The enzyme catalyses uridine(38/39/40) in tRNA = pseudouridine(38/39/40) in tRNA. In terms of biological role, formation of pseudouridine at positions 38, 39 and 40 in the anticodon stem and loop of transfer RNAs. This Thermotoga maritima (strain ATCC 43589 / DSM 3109 / JCM 10099 / NBRC 100826 / MSB8) protein is tRNA pseudouridine synthase A.